The primary structure comprises 235 residues: uncharacterized protein (235 aa).

The signal sequence occupies residues methionine 1–alanine 24.

This is an uncharacterized protein from Haemophilus influenzae (strain ATCC 51907 / DSM 11121 / KW20 / Rd).